Reading from the N-terminus, the 207-residue chain is High frequency lysogenization protein HflD homolog (207 aa).

Belongs to the HflD family.

It is found in the cytoplasm. It localises to the cell inner membrane. This Pseudomonas fluorescens (strain ATCC BAA-477 / NRRL B-23932 / Pf-5) protein is High frequency lysogenization protein HflD homolog.